A 589-amino-acid chain; its full sequence is Early growth response protein 4 (589 aa).

Disordered regions lie at residues 29–101, 383–411, and 436–466; these read GSAL…HSRR, AEGLPGLLTPPSGEGGSSGDGGEFLASTQ, and PGSSGVAAPPVPPPPPTPFPQAKARRKGRRG. Positions 76–86 are enriched in pro residues; the sequence is PLPPASPPPAR. Positions 92–101 are enriched in basic residues; it reads ARPRAPHSRR. A compositionally biased stretch (gly residues) spans 395–404; that stretch reads GEGGSSGDGG. The span at 444–454 shows a compositional bias: pro residues; sequence PPVPPPPPTPF. 3 C2H2-type zinc fingers span residues 483-507, 513-535, and 541-563; these read FACPVESCVRSFARSDELNRHLRIH, FQCRICLRNFSRSDHLTTHVRTH, and FACDVCGRRFARSDEKKRHSKVH.

This sequence belongs to the EGR C2H2-type zinc-finger protein family.

It is found in the nucleus. Transcriptional regulator. Recognizes and binds to the DNA sequence 5'-GCGGGGGCG-3' (GSG). Activates the transcription of target genes whose products are required for mitogenesis and differentiation. The polypeptide is Early growth response protein 4 (EGR4) (Homo sapiens (Human)).